The primary structure comprises 239 residues: Ribonuclease PH (239 aa).

Phosphate is bound by residues R86 and 124–126 (GTR).

Belongs to the RNase PH family. Homohexameric ring arranged as a trimer of dimers.

It carries out the reaction tRNA(n+1) + phosphate = tRNA(n) + a ribonucleoside 5'-diphosphate. Its function is as follows. Phosphorolytic 3'-5' exoribonuclease that plays an important role in tRNA 3'-end maturation. Removes nucleotide residues following the 3'-CCA terminus of tRNAs; can also add nucleotides to the ends of RNA molecules by using nucleoside diphosphates as substrates, but this may not be physiologically important. Probably plays a role in initiation of 16S rRNA degradation (leading to ribosome degradation) during starvation. The sequence is that of Ribonuclease PH from Rickettsia bellii (strain OSU 85-389).